Consider the following 172-residue polypeptide: Inorganic pyrophosphatase (172 aa).

3 residues coordinate substrate: Lys-29, Arg-43, and Tyr-55. Asp-65, Asp-70, and Asp-102 together coordinate Mg(2+). Tyr-141 contacts substrate.

The protein belongs to the PPase family. Homohexamer. The cofactor is Mg(2+).

It is found in the cytoplasm. It catalyses the reaction diphosphate + H2O = 2 phosphate + H(+). Its function is as follows. Catalyzes the hydrolysis of inorganic pyrophosphate (PPi) forming two phosphate ions. This is Inorganic pyrophosphatase from Rickettsia prowazekii (strain Madrid E).